A 455-amino-acid chain; its full sequence is Retinoic acid receptor beta (455 aa).

The interval 1 to 87 is modulating; sequence MTTSGHACPV…PLPPPRVYKP (87 aa). Positions 47-78 are disordered; that stretch reads HPPPSGCSTPSPATIETQSTSSEELVPSPPSP. Positions 53 to 66 are enriched in polar residues; that stretch reads CSTPSPATIETQST. The residue at position 77 (Ser-77) is a Phosphoserine. NR C4-type zinc fingers lie at residues 88 to 108 and 124 to 148; these read CFVC…CEGC and CHRD…LQKC. A DNA-binding region (nuclear receptor) is located at residues 88 to 153; it reads CFVCQDKSSG…RLQKCFEVGM (66 aa). The segment at 154-182 is hinge; it reads SKESVRNDRNKKKKETSKQECTESYEMTA. The NR LBD domain occupies 183–417; sequence ELDDLTEKIR…PLIQEMLENS (235 aa). The interval 415-455 is disordered; that stretch reads ENSEGHEPLTPSSSGNTAEHSPSISPSSVENSGVSQSPLVQ. Over residues 424–434 the composition is skewed to polar residues; sequence TPSSSGNTAEH. Residues 435–455 show a composition bias toward low complexity; sequence SPSISPSSVENSGVSQSPLVQ.

Belongs to the nuclear hormone receptor family. NR1 subfamily. In terms of assembly, homodimer. Heterodimer; with a RXR molecule. Binds DNA preferentially as a RAR/RXR heterodimer. Heterodimerizes (via NR LBD) with RXRA. Interacts weakly with NCOR2. In terms of tissue distribution, expressed in aortic endothelial cells (at protein level).

Its subcellular location is the nucleus. The protein resides in the cytoplasm. In terms of biological role, receptor for retinoic acid. Retinoic acid receptors bind as heterodimers to their target response elements in response to their ligands, all-trans or 9-cis retinoic acid, and regulate gene expression in various biological processes. The RXR/RAR heterodimers bind to the retinoic acid response elements (RARE) composed of tandem 5'-AGGTCA-3' sites known as DR1-DR5. In the absence or presence of hormone ligand, acts mainly as an activator of gene expression due to weak binding to corepressors. The RXRA/RARB heterodimer can act as a repressor on the DR1 element and as an activator on the DR5 element. In concert with RARG, required for skeletal growth, matrix homeostasis and growth plate function. This chain is Retinoic acid receptor beta (RARB), found in Homo sapiens (Human).